Here is a 201-residue protein sequence, read N- to C-terminus: Riboflavin synthase (201 aa).

2 Lumazine-binding repeats span residues 1–97 (MFTG…LGGH) and 98–197 (IVQG…ERLM). Residues 4-6 (GIV), 47-49 (CLT), 62-67 (DVMAET), 101-103 (GHV), lysine 136, 145-147 (SLT), and 162-167 (SLIPTT) contribute to the 2,4-dihydroxypteridine site.

As to quaternary structure, homotrimer.

It catalyses the reaction 2 6,7-dimethyl-8-(1-D-ribityl)lumazine + H(+) = 5-amino-6-(D-ribitylamino)uracil + riboflavin. The protein operates within cofactor biosynthesis; riboflavin biosynthesis; riboflavin from 2-hydroxy-3-oxobutyl phosphate and 5-amino-6-(D-ribitylamino)uracil: step 2/2. Functionally, catalyzes the dismutation of two molecules of 6,7-dimethyl-8-ribityllumazine, resulting in the formation of riboflavin and 5-amino-6-(D-ribitylamino)uracil. In Mycobacterium bovis (strain ATCC BAA-935 / AF2122/97), this protein is Riboflavin synthase (ribE).